Here is a 296-residue protein sequence, read N- to C-terminus: 4-hydroxybenzoate octaprenyltransferase (296 aa).

A run of 8 helical transmembrane segments spans residues 29 to 49 (AGWL…AGGF), 52 to 72 (WHLL…GCCI), 103 to 123 (LVLG…TNAI), 151 to 171 (VLGV…LGEV), 176 to 196 (WLLM…YAMV), 220 to 240 (VILL…MPYV), 243 to 263 (ALFT…YTLI), and 275 to 295 (FRLN…SYAL).

This sequence belongs to the UbiA prenyltransferase family. Mg(2+) serves as cofactor.

The protein resides in the cell inner membrane. The catalysed reaction is all-trans-octaprenyl diphosphate + 4-hydroxybenzoate = 4-hydroxy-3-(all-trans-octaprenyl)benzoate + diphosphate. Its pathway is cofactor biosynthesis; ubiquinone biosynthesis. In terms of biological role, catalyzes the prenylation of para-hydroxybenzoate (PHB) with an all-trans polyprenyl group. Mediates the second step in the final reaction sequence of ubiquinone-8 (UQ-8) biosynthesis, which is the condensation of the polyisoprenoid side chain with PHB, generating the first membrane-bound Q intermediate 3-octaprenyl-4-hydroxybenzoate. In Albidiferax ferrireducens (strain ATCC BAA-621 / DSM 15236 / T118) (Rhodoferax ferrireducens), this protein is 4-hydroxybenzoate octaprenyltransferase.